The following is a 459-amino-acid chain: Glycosyl hydrolase family 109 protein 1 (459 aa).

Residues 1 to 31 (MHNIHRRHFLKAAGAVTAGLVTANIALNANA) constitute a signal peptide (tat-type signal). Residues 64 to 65 (ER), D86, 135 to 138 (WEWH), 155 to 156 (EV), and N184 contribute to the NAD(+) site. Residues Y213, R232, 244–247 (YPTH), and Y326 contribute to the substrate site. Position 244 (Y244) interacts with NAD(+).

Belongs to the Gfo/Idh/MocA family. Glycosyl hydrolase 109 subfamily. It depends on NAD(+) as a cofactor. In terms of processing, predicted to be exported by the Tat system. The position of the signal peptide cleavage has not been experimentally proven.

In terms of biological role, glycosidase. In Shewanella sp. (strain ANA-3), this protein is Glycosyl hydrolase family 109 protein 1.